The chain runs to 348 residues: Fructose-1,6-bisphosphatase class 1 (348 aa).

Residues E92, D111, L113, and D114 each coordinate Mg(2+). Residues 114-117 (DGSS) and N204 contribute to the substrate site. E276 is a binding site for Mg(2+).

This sequence belongs to the FBPase class 1 family. As to quaternary structure, homotetramer. It depends on Mg(2+) as a cofactor.

The protein localises to the cytoplasm. It carries out the reaction beta-D-fructose 1,6-bisphosphate + H2O = beta-D-fructose 6-phosphate + phosphate. The protein operates within carbohydrate biosynthesis; gluconeogenesis. The chain is Fructose-1,6-bisphosphatase class 1 from Methylorubrum populi (strain ATCC BAA-705 / NCIMB 13946 / BJ001) (Methylobacterium populi).